The primary structure comprises 335 residues: Holliday junction branch migration complex subunit RuvB (335 aa).

The large ATPase domain (RuvB-L) stretch occupies residues 1–181 (MDRIVEIEKY…FGMQFRLEFY (181 aa)). ATP contacts are provided by residues L20, R21, G62, K65, T66, T67, 128 to 130 (EDY), R171, Y181, and R218. Residue T66 coordinates Mg(2+). The small ATPAse domain (RuvB-S) stretch occupies residues 182-252 (KDSELALILQ…RANEALNSLG (71 aa)). The segment at 255–335 (ELGFDAMDLR…LNYEKTLFEE (81 aa)) is head domain (RuvB-H). Positions 309 and 314 each coordinate DNA.

Belongs to the RuvB family. Homohexamer. Forms an RuvA(8)-RuvB(12)-Holliday junction (HJ) complex. HJ DNA is sandwiched between 2 RuvA tetramers; dsDNA enters through RuvA and exits via RuvB. An RuvB hexamer assembles on each DNA strand where it exits the tetramer. Each RuvB hexamer is contacted by two RuvA subunits (via domain III) on 2 adjacent RuvB subunits; this complex drives branch migration. In the full resolvosome a probable DNA-RuvA(4)-RuvB(12)-RuvC(2) complex forms which resolves the HJ.

Its subcellular location is the cytoplasm. The catalysed reaction is ATP + H2O = ADP + phosphate + H(+). The RuvA-RuvB-RuvC complex processes Holliday junction (HJ) DNA during genetic recombination and DNA repair, while the RuvA-RuvB complex plays an important role in the rescue of blocked DNA replication forks via replication fork reversal (RFR). RuvA specifically binds to HJ cruciform DNA, conferring on it an open structure. The RuvB hexamer acts as an ATP-dependent pump, pulling dsDNA into and through the RuvAB complex. RuvB forms 2 homohexamers on either side of HJ DNA bound by 1 or 2 RuvA tetramers; 4 subunits per hexamer contact DNA at a time. Coordinated motions by a converter formed by DNA-disengaged RuvB subunits stimulates ATP hydrolysis and nucleotide exchange. Immobilization of the converter enables RuvB to convert the ATP-contained energy into a lever motion, pulling 2 nucleotides of DNA out of the RuvA tetramer per ATP hydrolyzed, thus driving DNA branch migration. The RuvB motors rotate together with the DNA substrate, which together with the progressing nucleotide cycle form the mechanistic basis for DNA recombination by continuous HJ branch migration. Branch migration allows RuvC to scan DNA until it finds its consensus sequence, where it cleaves and resolves cruciform DNA. The chain is Holliday junction branch migration complex subunit RuvB from Campylobacter jejuni (strain RM1221).